Here is a 109-residue protein sequence, read N- to C-terminus: MSSFIDITNVISSHIEANLPAIASENVGSLANGAGIAYLGKYIGTGITMLAAGAVGLMQGFSTANAVQAVARNPEAQPKILSTMIVGLALAEAVAIYALIVSILIIFVA.

2 helical membrane-spanning segments follow: residues 42–62 and 88–108; these read YIGTGITMLAAGAVGLMQGFS and LALAEAVAIYALIVSILIIFV.

Belongs to the ATPase C chain family. In terms of assembly, F-type ATPases have 2 components, F(1) - the catalytic core - and F(0) - the membrane proton channel. F(1) has five subunits: alpha(3), beta(3), gamma(1), delta(1), epsilon(1). F(0) has three main subunits: a(1), b(2) and c(10-14). The alpha and beta chains form an alternating ring which encloses part of the gamma chain. F(1) is attached to F(0) by a central stalk formed by the gamma and epsilon chains, while a peripheral stalk is formed by the delta and b chains.

The protein localises to the cell membrane. Its function is as follows. F(1)F(0) ATP synthase produces ATP from ADP in the presence of a proton or sodium gradient. F-type ATPases consist of two structural domains, F(1) containing the extramembraneous catalytic core and F(0) containing the membrane proton channel, linked together by a central stalk and a peripheral stalk. During catalysis, ATP synthesis in the catalytic domain of F(1) is coupled via a rotary mechanism of the central stalk subunits to proton translocation. In terms of biological role, key component of the F(0) channel; it plays a direct role in translocation across the membrane. A homomeric c-ring of between 10-14 subunits forms the central stalk rotor element with the F(1) delta and epsilon subunits. In Ureaplasma parvum serovar 3 (strain ATCC 27815 / 27 / NCTC 11736), this protein is ATP synthase subunit c.